Reading from the N-terminus, the 115-residue chain is Large ribosomal subunit protein bL19 (115 aa).

Belongs to the bacterial ribosomal protein bL19 family.

This protein is located at the 30S-50S ribosomal subunit interface and may play a role in the structure and function of the aminoacyl-tRNA binding site. In Caldanaerobacter subterraneus subsp. tengcongensis (strain DSM 15242 / JCM 11007 / NBRC 100824 / MB4) (Thermoanaerobacter tengcongensis), this protein is Large ribosomal subunit protein bL19.